A 376-amino-acid chain; its full sequence is Glutamate 5-kinase (376 aa).

An ATP-binding site is contributed by Lys-15. 3 residues coordinate substrate: Ser-55, Asp-142, and Asn-154. Residues 174–175 and 216–222 contribute to the ATP site; these read TD and TGGMATK. One can recognise a PUA domain in the interval 281–359; that stretch reads AGKVLVDAGA…AEIEQLLGYR (79 aa).

Belongs to the glutamate 5-kinase family.

Its subcellular location is the cytoplasm. The catalysed reaction is L-glutamate + ATP = L-glutamyl 5-phosphate + ADP. Its pathway is amino-acid biosynthesis; L-proline biosynthesis; L-glutamate 5-semialdehyde from L-glutamate: step 1/2. Catalyzes the transfer of a phosphate group to glutamate to form L-glutamate 5-phosphate. The protein is Glutamate 5-kinase of Trichlorobacter lovleyi (strain ATCC BAA-1151 / DSM 17278 / SZ) (Geobacter lovleyi).